Consider the following 259-residue polypeptide: Methyltransferase sdnD (259 aa).

The protein belongs to the FkbM methyltransferase family.

It functions in the pathway antibiotic biosynthesis. Functionally, methyltransferase; part of the gene cluster that mediates the biosynthesis of sordarin and hypoxysordarin, glycoside antibiotics with a unique tetracyclic diterpene aglycone structure. First, the geranylgeranyl diphosphate synthase sdnC constructs GGDP from farnesyl diphosphate and isopentenyl diphosphate. The diterpene cyclase sdnA then catalyzes the cyclization of GGDP to afford cycloaraneosene. Cycloaraneosene is then hydroxylated four times by the putative cytochrome P450 monooxygenases sdnB, sdnE, sdnF and sdnH to give a hydroxylated cycloaraneosene derivative such as cycloaraneosene-8,9,13,19-tetraol. Although the order of the hydroxylations is unclear, at least C8, C9 and C13 of the cycloaraneosene skeleton are hydroxylated before the sordaricin formation. Dehydration of the 13-hydroxy group of the hydroxylated cycloaraneosene derivative might be catalyzed by an unassigned hypothetical protein such as sdnG and sdnP to construct the cyclopentadiene moiety. The FAD-dependent oxidoreductase sdnN is proposed to catalyze the oxidation at C9 of the hydroxylated cycloaraneosene derivative and also catalyze the Baeyer-Villiger oxidation to give the lactone intermediate. The presumed lactone intermediate would be hydrolyzed to give an acrolein moiety and a carboxylate moiety. Then, [4+2]cycloaddition would occur between the acrolein moiety and the cyclopentadiene moiety to give sordaricin. SdnN might also be involved in the [4+2]cycloaddition after the hypothesized oxidation to accommodate the oxidized product and prompt the [4+2]cycloaddition. GDP-6-deoxy-D-altrose may be biosynthesized from GDP-D-mannose by the putative GDP-mannose-4,6-dehydratase sdnI and the short-chain dehydrogenase sdnK. The glycosyltransferase sdnJ catalyzes the attachment of 6-deoxy-D-altrose onto the 19-hydroxy group of sordaricin to give 4'-O-demethylsordarin. The methyltransferase sdnD would complete the biosynthesis of sordarin. Sordarin can be further modified into hypoxysordarin. The unique acyl chain at the 3'-hydroxy group of hypoxysordarin would be constructed by an iterative type I PKS sdnO and the trans-acting polyketide methyltransferase sdnL. SdnL would be responsible for the introduction of an alpha-methyl group of the polyketide chain. Alternatively, the beta-lactamase-like protein sdnR might be responsible for the cleavage and transfer of the polyketide chain from the PKS sdnO to sordarin. Two putative cytochrome P450 monooxygenases, sdnQ and sdnT, might catalyze the epoxidations of the polyketide chain to complete the biosynthesis of hypoxysordarin. Transcriptional regulators sdnM and sdnS are presumably encoded for the transcriptional regulation of the expression of the sdn gene cluster. The chain is Methyltransferase sdnD from Sordaria araneosa (Pleurage araneosa).